The chain runs to 195 residues: Holliday junction branch migration complex subunit RuvA (195 aa).

Positions 1-64 (MIASIRGIIQ…EDALTLYGFS (64 aa)) are domain I. The segment at 65 to 142 (DPAQRNLFEQ…DLRQLSGTTP (78 aa)) is domain II. Residues 143 to 151 (GNVSTLDRE) form a flexible linker region. The domain III stretch occupies residues 151 to 195 (ELTDILISLGYSATEAAAAIAALPGDAPPTLEERLRLALRYFGSA).

Belongs to the RuvA family. Homotetramer. Forms an RuvA(8)-RuvB(12)-Holliday junction (HJ) complex. HJ DNA is sandwiched between 2 RuvA tetramers; dsDNA enters through RuvA and exits via RuvB. An RuvB hexamer assembles on each DNA strand where it exits the tetramer. Each RuvB hexamer is contacted by two RuvA subunits (via domain III) on 2 adjacent RuvB subunits; this complex drives branch migration. In the full resolvosome a probable DNA-RuvA(4)-RuvB(12)-RuvC(2) complex forms which resolves the HJ.

The protein localises to the cytoplasm. In terms of biological role, the RuvA-RuvB-RuvC complex processes Holliday junction (HJ) DNA during genetic recombination and DNA repair, while the RuvA-RuvB complex plays an important role in the rescue of blocked DNA replication forks via replication fork reversal (RFR). RuvA specifically binds to HJ cruciform DNA, conferring on it an open structure. The RuvB hexamer acts as an ATP-dependent pump, pulling dsDNA into and through the RuvAB complex. HJ branch migration allows RuvC to scan DNA until it finds its consensus sequence, where it cleaves and resolves the cruciform DNA. This Chloroflexus aurantiacus (strain ATCC 29364 / DSM 637 / Y-400-fl) protein is Holliday junction branch migration complex subunit RuvA.